Consider the following 313-residue polypeptide: MTDITMRQLLEAGVHFGHQTRYWNPKMAPYIYGARQKIHIINLEETLPAFRDALKFVKEVASKRGKVLFVGTKFAAREIVKEEATRCGMPYVDYRWLGGMLTNYKTIRQSIKRLKELEERLENEENLVGMTKKEILNLMREKEKLSANLAGIKNMGSLPDVLFVIDVEHERNAVQEANRLGITVLGIVDTNASPDNIDHVIPGNDDAIRAIRLYCKAIADTIIDARSVLELQKDEEAKEEKTKAKTTAKKVVTKKAKVAEKAQAAAEKKSEKPTTEKRPTKEAAETKETSEEPKTKEVQQPIEASKAEAEEGK.

Residues 234–243 (DEEAKEEKTK) are compositionally biased toward basic and acidic residues. The segment at 234–313 (DEEAKEEKTK…ASKAEAEEGK (80 aa)) is disordered. The span at 244-256 (AKTTAKKVVTKKA) shows a compositional bias: basic residues. Positions 266-297 (AEKKSEKPTTEKRPTKEAAETKETSEEPKTKE) are enriched in basic and acidic residues.

The protein belongs to the universal ribosomal protein uS2 family.

This Coxiella burnetii (strain Dugway 5J108-111) protein is Small ribosomal subunit protein uS2.